The chain runs to 447 residues: Argininosuccinate synthase (447 aa).

Residues 17–25 (AFSGGLDTS) and Ala43 contribute to the ATP site. Residue Tyr99 coordinates L-citrulline. ATP contacts are provided by Gly129 and Thr131. L-aspartate is bound by residues Thr131, Asn135, and Asp136. L-citrulline is bound at residue Asn135. Asp136 contributes to the ATP binding site. Residues Arg139 and Ser192 each coordinate L-citrulline. Asp194 is a binding site for ATP. L-citrulline is bound by residues Thr201, Glu203, and Glu280.

Belongs to the argininosuccinate synthase family. Type 2 subfamily. In terms of assembly, homotetramer.

The protein resides in the cytoplasm. The enzyme catalyses L-citrulline + L-aspartate + ATP = 2-(N(omega)-L-arginino)succinate + AMP + diphosphate + H(+). The protein operates within amino-acid biosynthesis; L-arginine biosynthesis; L-arginine from L-ornithine and carbamoyl phosphate: step 2/3. The polypeptide is Argininosuccinate synthase (Salmonella newport (strain SL254)).